Here is an 831-residue protein sequence, read N- to C-terminus: Multiphosphoryl transfer protein (831 aa).

An HPr domain is found at 1 to 90 (MLTIQFLCPL…EYIQVRFIDS (90 aa)). Catalysis depends on H15, which acts as the Pros-phosphohistidine intermediate; for HPr activity. H15 carries the phosphohistidine; by EI modification. A PTS EI region spans residues 119–650 (GNVLASGVGV…AVKSQLRQLD (532 aa)). The active-site Tele-phosphohistidine intermediate; for PTS EI activity is the H298. H298 is subject to Phosphohistidine; by autocatalysis. Phosphoenolpyruvate-binding residues include R405 and R441. Mg(2+) is bound by residues E540 and D564. Phosphoenolpyruvate is bound by residues 563-564 (ND) and R574. C611 (proton donor; for EI activity) is an active-site residue. A PTS EIIA type-2 domain is found at 685 to 828 (PLLALENIFV…QSILTLLETE (144 aa)). H747 (tele-phosphohistidine intermediate; for PTS EIIA activity) is an active-site residue. At H747 the chain carries Phosphohistidine; by HPr.

It belongs to the PEP-utilizing enzyme family. Requires Mg(2+) as cofactor.

It localises to the cytoplasm. The enzyme catalyses L-histidyl-[protein] + phosphoenolpyruvate = N(pros)-phospho-L-histidyl-[protein] + pyruvate. It catalyses the reaction D-fructose(out) + N(pros)-phospho-L-histidyl-[protein] = D-fructose 1-phosphate(in) + L-histidyl-[protein]. Multifunctional protein that includes general (non sugar-specific) and sugar-specific components of the phosphoenolpyruvate-dependent sugar phosphotransferase system (sugar PTS). This major carbohydrate active transport system catalyzes the phosphorylation of incoming sugar substrates concomitantly with their translocation across the cell membrane. The enzyme II FryABC PTS system is involved in fructose transport. The chain is Multiphosphoryl transfer protein (fryA) from Escherichia coli O6:H1 (strain CFT073 / ATCC 700928 / UPEC).